Consider the following 257-residue polypeptide: Major prion protein (257 aa).

The N-terminal stretch at 1–24 is a signal peptide; it reads MVKSHIGGWILVLFVAAWSDIGLC. Residues 25-234 form an interaction with GRB2, ERI3 and SYN1 region; it reads KKRPKPGGGW…EYEAYAQRGA (210 aa). The interval 28 to 113 is disordered; it reads PKPGGGWNTG…NKPSKPKTNM (86 aa). 5 repeat units span residues 54-62, 63-70, 71-78, 79-86, and 87-95. Positions 54–95 are 5 X 8 AA tandem repeats of P-H-G-G-G-W-G-Q; sequence PQGGGGWGQPHGGGWGQPHGGGWGQPHGGGWGQPHGGGGWGQ. A compositionally biased stretch (gly residues) spans 55–100; that stretch reads QGGGGWGQPHGGGWGQPHGGGWGQPHGGGWGQPHGGGGWGQGGGSH. Cu(2+) is bound by residues histidine 64, glycine 65, glycine 66, histidine 72, glycine 73, glycine 74, histidine 80, glycine 81, glycine 82, histidine 88, glycine 90, and glycine 91. A disulfide bond links cysteine 183 and cysteine 218. Residues asparagine 185 and asparagine 201 are each glycosylated (N-linked (GlcNAc...) asparagine). The GPI-anchor amidated alanine moiety is linked to residue alanine 234. Residues 235 to 257 constitute a propeptide, removed in mature form; that stretch reads SVILFSSPPVILLISFLLFLIVG.

The protein belongs to the prion family. As to quaternary structure, monomer and homodimer. Has a tendency to aggregate into amyloid fibrils containing a cross-beta spine, formed by a steric zipper of superposed beta-strands. Soluble oligomers may represent an intermediate stage on the path to fibril formation. Copper binding may promote oligomerization. Interacts with GRB2, APP, ERI3/PRNPIP and SYN1. Mislocalized cytosolically exposed PrP interacts with MGRN1; this interaction alters MGRN1 subcellular location and causes lysosomal enlargement. Interacts with KIAA1191.

It localises to the cell membrane. The protein localises to the golgi apparatus. In terms of biological role, its primary physiological function is unclear. Has cytoprotective activity against internal or environmental stresses. May play a role in neuronal development and synaptic plasticity. May be required for neuronal myelin sheath maintenance. May play a role in iron uptake and iron homeostasis. Soluble oligomers are toxic to cultured neuroblastoma cells and induce apoptosis (in vitro). Association with GPC1 (via its heparan sulfate chains) targets PRNP to lipid rafts. Also provides Cu(2+) or Zn(2+) for the ascorbate-mediated GPC1 deaminase degradation of its heparan sulfate side chains. This Sus scrofa (Pig) protein is Major prion protein (PRNP).